The chain runs to 180 residues: Dual-action ribosomal maturation protein DarP (180 aa).

A compositionally biased stretch (basic and acidic residues) spans 1–13; the sequence is MKPDKTENTEHGI. Residues 1-21 are disordered; it reads MKPDKTENTEHGIEPVSKTKR.

This sequence belongs to the DarP family.

It is found in the cytoplasm. Member of a network of 50S ribosomal subunit biogenesis factors which assembles along the 30S-50S interface, preventing incorrect 23S rRNA structures from forming. Promotes peptidyl transferase center (PTC) maturation. This Methylobacillus flagellatus (strain ATCC 51484 / DSM 6875 / VKM B-1610 / KT) protein is Dual-action ribosomal maturation protein DarP.